The sequence spans 230 residues: Dephospho-CoA kinase (230 aa).

One can recognise a DPCK domain in the interval 3 to 225; the sequence is IIGLTGGIAT…REGGAICPTP (223 aa). 11 to 16 provides a ligand contact to ATP; the sequence is ATGKST.

It belongs to the CoaE family.

Its subcellular location is the cytoplasm. The catalysed reaction is 3'-dephospho-CoA + ATP = ADP + CoA + H(+). Its pathway is cofactor biosynthesis; coenzyme A biosynthesis; CoA from (R)-pantothenate: step 5/5. Its function is as follows. Catalyzes the phosphorylation of the 3'-hydroxyl group of dephosphocoenzyme A to form coenzyme A. The chain is Dephospho-CoA kinase from Synechococcus sp. (strain JA-3-3Ab) (Cyanobacteria bacterium Yellowstone A-Prime).